The primary structure comprises 263 residues: Large ribosomal subunit protein uL23m (263 aa).

The transit peptide at 1 to 45 (MPRLTVGTKNMLYPLQKTLAVGSCKPEQVPIRSLASVVESSSKIL) directs the protein to the mitochondrion.

The protein belongs to the universal ribosomal protein uL23 family. In terms of assembly, component of the mitochondrial large ribosomal subunit (mt-LSU). Mature yeast 74S mitochondrial ribosomes consist of a small (37S) and a large (54S) subunit. The 37S small subunit contains a 15S ribosomal RNA (15S mt-rRNA) and 34 different proteins. The 54S large subunit contains a 21S rRNA (21S mt-rRNA) and 46 different proteins. uL23m forms the wall of the exit tunnel. Interacts with the C-terminus of OXA1.

The protein localises to the mitochondrion. Its function is as follows. Component of the mitochondrial ribosome (mitoribosome), a dedicated translation machinery responsible for the synthesis of mitochondrial genome-encoded proteins, including at least some of the essential transmembrane subunits of the mitochondrial respiratory chain. The mitoribosomes are attached to the mitochondrial inner membrane and translation products are cotranslationally integrated into the membrane. In Saccharomyces cerevisiae (strain ATCC 204508 / S288c) (Baker's yeast), this protein is Large ribosomal subunit protein uL23m (MRP20).